Consider the following 382-residue polypeptide: Histidinol-phosphate aminotransferase (382 aa).

Residues 1 to 28 form a disordered region; that stretch reads MTSAPRPRPTLDDLPLREDLRGKSPYGA. A compositionally biased stretch (basic and acidic residues) spans 9-22; it reads PTLDDLPLREDLRG. The residue at position 233 (K233) is an N6-(pyridoxal phosphate)lysine.

This sequence belongs to the class-II pyridoxal-phosphate-dependent aminotransferase family. Histidinol-phosphate aminotransferase subfamily. In terms of assembly, homodimer. The cofactor is pyridoxal 5'-phosphate.

It catalyses the reaction L-histidinol phosphate + 2-oxoglutarate = 3-(imidazol-4-yl)-2-oxopropyl phosphate + L-glutamate. It functions in the pathway amino-acid biosynthesis; L-histidine biosynthesis; L-histidine from 5-phospho-alpha-D-ribose 1-diphosphate: step 7/9. The polypeptide is Histidinol-phosphate aminotransferase (Mycobacterium marinum (strain ATCC BAA-535 / M)).